The sequence spans 226 residues: 2,3-bisphosphoglycerate-dependent phosphoglycerate mutase (226 aa).

Substrate contacts are provided by residues 8–15 (RHGQSQWN), 21–22 (TG), arginine 58, 112–115 (ERMY), lysine 123, 139–140 (RR), and 183–184 (GN). Catalysis depends on histidine 9, which acts as the Tele-phosphohistidine intermediate. The active-site Proton donor/acceptor is glutamate 112.

Belongs to the phosphoglycerate mutase family. BPG-dependent PGAM subfamily.

The enzyme catalyses (2R)-2-phosphoglycerate = (2R)-3-phosphoglycerate. The protein operates within carbohydrate degradation; glycolysis; pyruvate from D-glyceraldehyde 3-phosphate: step 3/5. Its function is as follows. Catalyzes the interconversion of 2-phosphoglycerate and 3-phosphoglycerate. In Protochlamydia amoebophila (strain UWE25), this protein is 2,3-bisphosphoglycerate-dependent phosphoglycerate mutase.